Consider the following 404-residue polypeptide: Cysteine desulfurase IscS (404 aa).

Pyridoxal 5'-phosphate-binding positions include 75–76 (AT), Asn155, Gln183, and 203–205 (SAH). Lys206 carries the post-translational modification N6-(pyridoxal phosphate)lysine. Thr243 lines the pyridoxal 5'-phosphate pocket. The active-site Cysteine persulfide intermediate is the Cys328. Residue Cys328 participates in [2Fe-2S] cluster binding.

It belongs to the class-V pyridoxal-phosphate-dependent aminotransferase family. NifS/IscS subfamily. In terms of assembly, homodimer. Forms a heterotetramer with IscU, interacts with other sulfur acceptors. It depends on pyridoxal 5'-phosphate as a cofactor.

It localises to the cytoplasm. It carries out the reaction (sulfur carrier)-H + L-cysteine = (sulfur carrier)-SH + L-alanine. The protein operates within cofactor biosynthesis; iron-sulfur cluster biosynthesis. In terms of biological role, master enzyme that delivers sulfur to a number of partners involved in Fe-S cluster assembly, tRNA modification or cofactor biosynthesis. Catalyzes the removal of elemental sulfur atoms from cysteine to produce alanine. Functions as a sulfur delivery protein for Fe-S cluster synthesis onto IscU, an Fe-S scaffold assembly protein, as well as other S acceptor proteins. The chain is Cysteine desulfurase IscS from Vibrio campbellii (strain ATCC BAA-1116).